The following is a 176-amino-acid chain: Peptide deformylase 1 (176 aa).

Positions 99 and 141 each coordinate Fe cation. The active site involves glutamate 142. Histidine 145 lines the Fe cation pocket.

It belongs to the polypeptide deformylase family. Fe(2+) serves as cofactor.

It carries out the reaction N-terminal N-formyl-L-methionyl-[peptide] + H2O = N-terminal L-methionyl-[peptide] + formate. Removes the formyl group from the N-terminal Met of newly synthesized proteins. Requires at least a dipeptide for an efficient rate of reaction. N-terminal L-methionine is a prerequisite for activity but the enzyme has broad specificity at other positions. The sequence is that of Peptide deformylase 1 from Bordetella pertussis (strain Tohama I / ATCC BAA-589 / NCTC 13251).